The chain runs to 419 residues: O-methyltransferase gsfB (419 aa).

S-adenosyl-L-methionine contacts are provided by residues 255-256 (GG), D278, 300-301 (DF), and R316. H320 (proton acceptor) is an active-site residue.

Belongs to the class I-like SAM-binding methyltransferase superfamily. Cation-independent O-methyltransferase family.

It catalyses the reaction 2-(2,4-dihydroxy-6-oxidobenzoyl)-5-hydroxy-3-methylbenzenolate + S-adenosyl-L-methionine = griseophenone D + S-adenosyl-L-homocysteine + H(+). Its pathway is secondary metabolite biosynthesis; terpenoid biosynthesis. Its function is as follows. O-methyltransferase; part of the gene cluster that mediates the biosynthesis of griseofulvin, an important antifungal drug that has been in use for a long time for treating dermatophyte infections. The first step of the pathway is the formation of the heptaketide backbone by gsfA which is initiated by priming with acetyl-CoA, followed by sequential condensations of 6 malonyl-CoA units. The resulting benzophenone can undergo a spontaneous dehydration to form norlichexanthone. However, the true precursor for the griseofulvin biosynthesis is not norlichexanthone, but the heptaketide benzophenone that is O-methylated at 3-OH by gsfB to produce griseophenone D which is further methylated at 9-OH by gsfC to yield griseophenone C. Griseophenone C is then substrate of halogenase gsfI which is responsible for the regio-specific chlorination at the C13 position to form griseophenone B. The cytochrome P450 gsfF catalyzes the coupling of orcinol and phloroglucinol rings in griseophenone B to form desmethyl-dehydrogriseofulvin A which is further methylated at 5-OH by gsfD to yield dehydrogriseofulvin. Finally, gsfE performs stereospecific reduction of enone 18 of dehydrogriseofulvin to afford the final product griseofulvin. The polypeptide is O-methyltransferase gsfB (Penicillium aethiopicum).